The chain runs to 272 residues: Ribosomal RNA small subunit methyltransferase A (272 aa).

S-adenosyl-L-methionine-binding residues include asparagine 18, leucine 20, glycine 45, glutamate 66, aspartate 91, and asparagine 113.

This sequence belongs to the class I-like SAM-binding methyltransferase superfamily. rRNA adenine N(6)-methyltransferase family. RsmA subfamily.

It localises to the cytoplasm. The enzyme catalyses adenosine(1518)/adenosine(1519) in 16S rRNA + 4 S-adenosyl-L-methionine = N(6)-dimethyladenosine(1518)/N(6)-dimethyladenosine(1519) in 16S rRNA + 4 S-adenosyl-L-homocysteine + 4 H(+). Its function is as follows. Specifically dimethylates two adjacent adenosines (A1518 and A1519) in the loop of a conserved hairpin near the 3'-end of 16S rRNA in the 30S particle. May play a critical role in biogenesis of 30S subunits. The chain is Ribosomal RNA small subunit methyltransferase A from Pectobacterium atrosepticum (strain SCRI 1043 / ATCC BAA-672) (Erwinia carotovora subsp. atroseptica).